Consider the following 26-residue polypeptide: Thrombopoietin (26 aa).

It belongs to the EPO/TPO family.

It localises to the secreted. Lineage-specific cytokine affecting the proliferation and maturation of megakaryocytes from their committed progenitor cells. It acts at a late stage of megakaryocyte development. It may be the major physiological regulator of circulating platelets. This is Thrombopoietin (THPO) from Sus scrofa (Pig).